The following is a 322-amino-acid chain: Agmatinase (322 aa).

Mn(2+)-binding residues include histidine 136, aspartate 160, histidine 162, aspartate 164, aspartate 243, and aspartate 245.

It belongs to the arginase family. Agmatinase subfamily. The cofactor is Mn(2+).

It catalyses the reaction agmatine + H2O = urea + putrescine. Its pathway is amine and polyamine biosynthesis; putrescine biosynthesis via agmatine pathway; putrescine from agmatine: step 1/1. Functionally, catalyzes the formation of putrescine from agmatine. This Chromobacterium violaceum (strain ATCC 12472 / DSM 30191 / JCM 1249 / CCUG 213 / NBRC 12614 / NCIMB 9131 / NCTC 9757 / MK) protein is Agmatinase.